The following is a 269-amino-acid chain: Aquaporin-1 (269 aa).

Topologically, residues 2–11 are cytoplasmic; that stretch reads ASEFKKKLFW. Residues 12 to 29 form a helical membrane-spanning segment; that stretch reads RAVVAEFLATTLFVFISI. Topologically, residues 30–46 are extracellular; that stretch reads GSALGFKYPVGNNQTAV. A glycan (N-linked (GlcNAc...) asparagine) is linked at asparagine 42. A helical membrane pass occupies residues 47-65; it reads QDNVKVSLAFGLSIATLAQ. Residues 66 to 68 lie on the Cytoplasmic side of the membrane; it reads SVG. An intramembrane segment occupies 69–82; sequence HISGAHLNPAVTLG. The short motif at 76 to 78 is the NPA 1 element; that stretch reads NPA. The Cytoplasmic segment spans residues 83 to 90; sequence LLLSCQIS. The chain crosses the membrane as a helical span at residues 91 to 109; sequence IFRALMYIIAQCVGAIVAT. At 110–133 the chain is on the extracellular side; the sequence is AILSGITSSLTGNSLGRNDLADGV. Residues 134-153 form a helical membrane-spanning segment; that stretch reads NSGQGLGIEIIGTLQLVLCV. The Cytoplasmic portion of the chain corresponds to 154–163; that stretch reads LATTDRRRRD. The chain crosses the membrane as a helical span at residues 164-181; the sequence is LGGSAPLAIGLSVALGHL. Residues 182–186 are Extracellular-facing; the sequence is LAIDY. Residues 187 to 199 lie within the membrane without spanning it; it reads TGCGINPARSFGS. Residues 192 to 194 carry the NPA 2 motif; it reads NPA. Over 200 to 206 the chain is Extracellular; that stretch reads AVITHNF. Asparagine 205 is a glycosylation site (N-linked (GlcNAc...) asparagine). A helical transmembrane segment spans residues 207 to 224; that stretch reads SNHWIFWVGPFIGGALAV. Topologically, residues 225–269 are cytoplasmic; sequence LIYDFILAPRSSDLTDRVKVWTSGQVEEYDLDADDINSRVEMKPK. Position 247 is a phosphoserine (serine 247). Tyrosine 253 carries the post-translational modification Phosphotyrosine. Serine 262 is modified (phosphoserine).

It belongs to the MIP/aquaporin (TC 1.A.8) family. In terms of assembly, homotetramer; each monomer provides an independent water pore. Component of the ankyrin-1 complex in the erythrocyte, composed of ANK1, RHCE, RHAG, SLC4A1, EPB42, GYPA, GYPB and AQP1. Interacts with EPHB2; involved in endolymph production in the inner ear. Identified in a complex with STOM. Interacts (via the N-terminal) with ANK1 (via ANK 1-5 repeats). Interacts (via the C-terminal) with EPB42. In terms of tissue distribution, detected in erythrocytes (at protein level). Expressed in a number of tissues including erythrocytes, renal tubules, retinal pigment epithelium, heart, lung, skeletal muscle, kidney and pancreas. Weakly expressed in brain, placenta and liver.

It is found in the cell membrane. The catalysed reaction is H2O(in) = H2O(out). The enzyme catalyses nitric oxide(out) = nitric oxide(in). It catalyses the reaction CO2(out) = CO2(in). It carries out the reaction glycerol(in) = glycerol(out). The catalysed reaction is H2O2(out) = H2O2(in). The enzyme catalyses K(+)(in) = K(+)(out). It catalyses the reaction Na(+)(in) = Na(+)(out). With respect to regulation, the water channel activity is inhibited by P-choloromercuribenzene sulphonate and diethylpyrocarbonate(DPPC). The glycerol channel activity is inhibited by P-choloromercuribenzene sulphonate, diethylpyrocarbonate(DPPC), phloretin and Cu(2+). Inhibited by mercury. Forms a water channel that facilitates the transport of water across cell membranes, playing a crucial role in water homeostasis in various tissues. Could also be permeable to small solutes including hydrogen peroxide, glycerol and gases such as amonnia (NH3), nitric oxide (NO) and carbon dioxide (CO2). Recruited to the ankyrin-1 complex, a multiprotein complex of the erythrocyte membrane, it could be part of a CO2 metabolon, linking facilitated diffusion of CO2 across the membrane, anion exchange of Cl(-)/HCO3(-) and interconversion of dissolved CO2 and carbonic acid in the cytosol. In vitro, it shows non-selective gated cation channel activity and may be permeable to cations like K(+) and Na(+) in vivo. This is Aquaporin-1 from Homo sapiens (Human).